Here is a 782-residue protein sequence, read N- to C-terminus: Acetazolamide conferring resistance protein zam (782 aa).

Positions 270–579 constitute an RNB domain; it reads EVALSLESQA…QRLLKLVLTE (310 aa). An S1 motif domain is found at 655–736; the sequence is GEIFRGLITG…YRQQIDLGAV (82 aa). Positions 737-782 are disordered; it reads NNAPKDSANMDFDDDDEDGDEREEQDTMDWDAMEDGDDDEGGAVIF. Acidic residues predominate over residues 747–782; that stretch reads DFDDDDEDGDEREEQDTMDWDAMEDGDDDEGGAVIF.

The protein belongs to the RNR ribonuclease family.

In terms of biological role, not known; control resistance to the carbonic anhydrase inhibitor acetazolamide. This chain is Acetazolamide conferring resistance protein zam (zam), found in Synechocystis sp. (strain ATCC 27184 / PCC 6803 / Kazusa).